The primary structure comprises 332 residues: MIVVTGAAGFIGSNLVRGLNRRGIYDIIAIDDLTEGDKFRNLVDCRIADYMHHEDARALLKAGQFPRVRAVLHQGACSDTTERNGQYMMDNNYRVTLEWFEYCQANRVPLIYASSAAVYGASTVYVEDPANEGPLNVYGYSKLLFDQVLRTRMDKLTAQVVGLRYFNVYGPHEQHKGRMASVAFHNMNQFLAEGHVRLFSGWDGYADGGQSRDFISVEDVVDVNLHFLDHPGTSGIFNCGTGRAQPFNDVAAAVVNTLRAEQGEAPLSLDELVSQGLIRYIPFPDDLKGRYQSFTQANVDALRAAGYTAVMRDVQTGVSEYVRYWRSRKSLA.

NADP(+) is bound by residues 10–11 (FI), 31–32 (DD), Lys-38, 74–78 (QGACS), and Asn-91. Residue Tyr-138 is the Proton acceptor of the active site. Residue Lys-142 coordinates NADP(+). Asn-167 is a substrate binding site. NADP(+) contacts are provided by Val-168 and Lys-176. Residue Lys-176 is the Proton acceptor of the active site. Residues Arg-178, His-185, 199 to 202 (FSGW), Arg-212, and Tyr-291 each bind substrate.

The protein belongs to the NAD(P)-dependent epimerase/dehydratase family. HldD subfamily. In terms of assembly, homopentamer. It depends on NADP(+) as a cofactor.

It carries out the reaction ADP-D-glycero-beta-D-manno-heptose = ADP-L-glycero-beta-D-manno-heptose. The protein operates within nucleotide-sugar biosynthesis; ADP-L-glycero-beta-D-manno-heptose biosynthesis; ADP-L-glycero-beta-D-manno-heptose from D-glycero-beta-D-manno-heptose 7-phosphate: step 4/4. Catalyzes the interconversion between ADP-D-glycero-beta-D-manno-heptose and ADP-L-glycero-beta-D-manno-heptose via an epimerization at carbon 6 of the heptose. The polypeptide is ADP-L-glycero-D-manno-heptose-6-epimerase (Bordetella avium (strain 197N)).